The sequence spans 505 residues: AMP phosphorylase (505 aa).

Residues G170, 196-201, and T205 each bind AMP; that span reads SRAITS. The Proton donor role is filled by D258. AMP contacts are provided by S266 and K290.

Belongs to the thymidine/pyrimidine-nucleoside phosphorylase family. Type 2 subfamily.

The enzyme catalyses AMP + phosphate = alpha-D-ribose 1,5-bisphosphate + adenine. The catalysed reaction is CMP + phosphate = cytosine + alpha-D-ribose 1,5-bisphosphate. It catalyses the reaction UMP + phosphate = alpha-D-ribose 1,5-bisphosphate + uracil. Functionally, catalyzes the conversion of AMP and phosphate to adenine and ribose 1,5-bisphosphate (R15P). Exhibits phosphorylase activity toward CMP and UMP in addition to AMP. Functions in an archaeal AMP degradation pathway, together with R15P isomerase and RubisCO. The sequence is that of AMP phosphorylase from Methanococcus maripaludis (strain C5 / ATCC BAA-1333).